Reading from the N-terminus, the 340-residue chain is Fructoselysine 6-phosphate deglycase (340 aa).

2 consecutive SIS domains span residues 35–169 (IVEE…RLAP) and 201–331 (LGEL…PDER).

In terms of assembly, homododecamer.

The enzyme catalyses N(6)-(6-phospho-D-fructosyl)-L-lysine + H2O = D-glucose 6-phosphate + L-lysine. It participates in carbohydrate metabolism; fructoselysine degradation; D-glucose 6-phosphate and lysine from fructoselysine: step 2/2. In terms of biological role, catalyzes the reversible conversion of fructoselysine 6-phosphate to glucose 6-phosphate and lysine. Functions in a fructoselysine degradation pathway that allows E.coli to grow on fructoselysine or psicoselysine. This chain is Fructoselysine 6-phosphate deglycase (frlB), found in Escherichia coli O157:H7.